Here is a 1907-residue protein sequence, read N- to C-terminus: Receptor-type tyrosine-protein phosphatase S (1907 aa).

The signal sequence occupies residues 1 to 29 (MAPTWRPSVVSVVGPVGLFLVLLARGCLA). The Extracellular portion of the chain corresponds to 30–1257 (EEPPRFIREP…PQPIVDGEEG (1228 aa)). Ig-like C2-type domains follow at residues 33–123 (PRFI…AKLT), 135–224 (PNID…ANLY), and 232–314 (PRFS…AQIT). Cystine bridges form between C54–C107 and C156–C207. Residues 68-72 (KKGKK) are important for binding to glycosaminoglycan chains. N250 and N295 each carry an N-linked (GlcNAc...) asparagine glycan. Cysteines 253 and 298 form a disulfide. Fibronectin type-III domains lie at 321–411 (APGT…TGEQ), 416–510 (APRN…TQQG), 514–603 (QPMN…TLQA), 608–705 (PPQD…TDED), 710–809 (PPRK…TKGA), 810–906 (VLGR…APRG), 907–1008 (FPQI…LARD), and 1011–1095 (SPKN…TAFN). The segment covering 691–700 (PGPESSPVVV) has biased composition (low complexity). A disordered region spans residues 691–711 (PGPESSPVVVRTDEDVPSAPP). N-linked (GlcNAc...) asparagine glycosylation occurs at N720. N916 carries N-linked (GlcNAc...) asparagine glycosylation. Residues 1258-1278 (LIWVIGPVLAVVFIICIVIAI) traverse the membrane as a helical segment. At 1279 to 1907 (LLYKNKPDSK…YLGSFDHYAT (629 aa)) the chain is on the cytoplasmic side. Positions 1286–1296 (DSKRKDSEPRT) are enriched in basic and acidic residues. Positions 1286–1313 (DSKRKDSEPRTKCLLNNADLAPHHPKDP) are disordered. Tyrosine-protein phosphatase domains follow at residues 1352–1607 (LSQE…LLEA) and 1639–1898 (MELE…ALEY). Residues D1516, 1548-1554 (CSAGVGR), and Q1592 each bind substrate. Residue C1548 is the Phosphocysteine intermediate of the active site. The active-site Phosphocysteine intermediate is C1839.

The protein belongs to the protein-tyrosine phosphatase family. Receptor class 2A subfamily. Binding to large heparan sulfate proteoglycan structures promotes oligomerization. Binding to chondroitin sulfate proteoglycan does not lead to oligomerization. Interacts (via Ig-like domains) with NTRK1 and NTRK3, but does not form detectable complexes with NTRK2. Interacts with PPFIA1, PPFIA2 and PPFIA3. Post-translationally, a cleavage occurs, separating the extracellular domain from the transmembrane segment. This process called 'ectodomain shedding' is thought to be involved in receptor desensitization, signal transduction and/or membrane localization. In terms of tissue distribution, detected in brain neocortex (at protein level). Detected in heart, testis and liver. Detected at lower levels in skeletal muscle, brain, spleen and kidney.

The protein resides in the cell membrane. It localises to the cell projection. The protein localises to the axon. Its subcellular location is the perikaryon. It is found in the cytoplasmic vesicle. The protein resides in the secretory vesicle. It localises to the synaptic vesicle membrane. The protein localises to the synapse. Its subcellular location is the synaptosome. It is found in the postsynaptic density. The protein resides in the neuron projection. It localises to the growth cone. It carries out the reaction O-phospho-L-tyrosyl-[protein] + H2O = L-tyrosyl-[protein] + phosphate. In terms of biological role, cell surface receptor that binds to glycosaminoglycans, including chondroitin sulfate proteoglycans and heparan sulfate proteoglycans. Binding to chondroitin sulfate and heparan sulfate proteoglycans has opposite effects on PTPRS oligomerization and regulation of neurite outgrowth. Contributes to the inhibition of neurite and axonal outgrowth by chondroitin sulfate proteoglycans, also after nerve transection. Plays a role in stimulating neurite outgrowth in response to the heparan sulfate proteoglycan GPC2. Required for normal brain development, especially for normal development of the pituitary gland and the olfactory bulb. Functions as tyrosine phosphatase. Mediates dephosphorylation of NTRK1, NTRK2 and NTRK3. Plays a role in down-regulation of signaling cascades that lead to the activation of Akt and MAP kinases. Down-regulates TLR9-mediated activation of NF-kappa-B, as well as production of TNF, interferon alpha and interferon beta. This Rattus norvegicus (Rat) protein is Receptor-type tyrosine-protein phosphatase S (Ptprs).